We begin with the raw amino-acid sequence, 64 residues long: Conotoxin Pn-B01121 (64 aa).

Positions 1 to 22 (MCCLPVFVILLLLIASAPSVDA) are cleaved as a signal peptide. Positions 23-48 (LPKTKDDMSLASFHDNAKRTLQILSN) are excised as a propeptide. Tryptophan 63 is subject to Tryptophan amide.

This sequence belongs to the conotoxin T superfamily. Contains 2 disulfide bonds that can be either 'C1-C3, C2-C4' or 'C1-C4, C2-C3', since these disulfide connectivities have been observed for conotoxins with cysteine framework V (for examples, see AC P0DQQ7 and AC P81755). In terms of tissue distribution, expressed by the venom duct.

The protein localises to the secreted. This Conus pennaceus (Feathered cone) protein is Conotoxin Pn-B01121.